We begin with the raw amino-acid sequence, 394 residues long: uncharacterized protein (394 aa).

This is an uncharacterized protein from Bacillus subtilis (strain 168).